The primary structure comprises 297 residues: MPELPEVEVVRAGLAPAVTGATILGVEVFELRSLKRHDPLAGSFESLLTGRSMQTPARRGKFLWIPLDSSPRSAIVAHLGMSGQILLRDPGTVENGLLRIRLYIEHPEHGELWVHFVDQRLFGSMAVDALVPTVDGAPAGLGTDEALLPAQVSHIARDPLDPVFDDAAFAAVLARRRSGIKRVLLDQTLISGIGNIYADESLWAARIHYDHPATALSRPRVRTLLAELRRVLGRALAEGGTSFDAQYVNVNGASGYFSRSLHVYGRQGQPCDRCGTAIVRESFMNRGSHFCPRCQRM.

P2 serves as the catalytic Schiff-base intermediate with DNA. E3 functions as the Proton donor in the catalytic mechanism. The active-site Proton donor; for beta-elimination activity is K61. DNA-binding residues include R120 and R176. The FPG-type zinc-finger motif lies at 262-296 (HVYGRQGQPCDRCGTAIVRESFMNRGSHFCPRCQR). R286 (proton donor; for delta-elimination activity) is an active-site residue.

Belongs to the FPG family. In terms of assembly, monomer. The cofactor is Zn(2+).

The enzyme catalyses Hydrolysis of DNA containing ring-opened 7-methylguanine residues, releasing 2,6-diamino-4-hydroxy-5-(N-methyl)formamidopyrimidine.. It catalyses the reaction 2'-deoxyribonucleotide-(2'-deoxyribose 5'-phosphate)-2'-deoxyribonucleotide-DNA = a 3'-end 2'-deoxyribonucleotide-(2,3-dehydro-2,3-deoxyribose 5'-phosphate)-DNA + a 5'-end 5'-phospho-2'-deoxyribonucleoside-DNA + H(+). In terms of biological role, involved in base excision repair of DNA damaged by oxidation or by mutagenic agents. Acts as a DNA glycosylase that recognizes and removes damaged bases. Has a preference for oxidized purines, such as 7,8-dihydro-8-oxoguanine (8-oxoG). Has AP (apurinic/apyrimidinic) lyase activity and introduces nicks in the DNA strand. Cleaves the DNA backbone by beta-delta elimination to generate a single-strand break at the site of the removed base with both 3'- and 5'-phosphates. This Leifsonia xyli subsp. xyli (strain CTCB07) protein is Formamidopyrimidine-DNA glycosylase.